A 639-amino-acid polypeptide reads, in one-letter code: Poly(A)-specific ribonuclease PARN (639 aa).

D28 and E30 together coordinate a divalent metal cation. Phosphoserine occurs at positions 163 and 167. Residues K178–D245 enclose the R3H domain. Position 220 is an N6-acetyllysine (K220). A divalent metal cation contacts are provided by D292 and D382. N6-acetyllysine is present on K499. S530 is subject to Phosphoserine. The residue at position 557 (S557) is a Phosphoserine; by MAPKAPK2. Positions T563–L611 are disordered. 5 positions are modified to phosphoserine: S583, S587, S619, S623, and S628. T631 carries the post-translational modification Phosphothreonine.

Belongs to the CAF1 family. As to quaternary structure, homodimer. Found in a mRNA decay complex with RENT1, RENT2 and RENT3B. Interacts with KHSRP. Interacts with CELF1/CUGBP1. Interacts with ZC3HAV1 in an RNA-independent manner. Interacts with DHX36. Mg(2+) is required as a cofactor. Post-translationally, phosphorylation by MAPKAPK2, preventing GADD45A mRNA degradation after genotoxic stress.

It localises to the nucleus. The protein localises to the cytoplasm. It is found in the nucleolus. It catalyses the reaction Exonucleolytic cleavage of poly(A) to 5'-AMP.. Functionally, 3'-exoribonuclease that has a preference for poly(A) tails of mRNAs, thereby efficiently degrading poly(A) tails. Exonucleolytic degradation of the poly(A) tail is often the first step in the decay of eukaryotic mRNAs and is also used to silence certain maternal mRNAs translationally during oocyte maturation and early embryonic development. Interacts with both the 3'-end poly(A) tail and the 5'-end cap structure during degradation, the interaction with the cap structure being required for an efficient degradation of poly(A) tails. Involved in nonsense-mediated mRNA decay, a critical process of selective degradation of mRNAs that contain premature stop codons. Also involved in degradation of inherently unstable mRNAs that contain AU-rich elements (AREs) in their 3'-UTR, possibly via its interaction with KHSRP. Probably mediates the removal of poly(A) tails of AREs mRNAs, which constitutes the first step of destabilization. Also able to recognize poly(A) tails of microRNAs such as MIR21 and H/ACA box snoRNAs (small nucleolar RNAs) leading to microRNAs degradation or snoRNA increased stability. This Pongo abelii (Sumatran orangutan) protein is Poly(A)-specific ribonuclease PARN (PARN).